The sequence spans 658 residues: Endoplasmic reticulum chaperone BiP (658 aa).

The first 19 residues, 1–19 (MVTMKLFALVLLVSASVFA), serve as a signal peptide directing secretion. ATP is bound by residues 38 to 41 (GTTY), Lys-98, 228 to 230 (GGT), 294 to 301 (EKAKRALS), and 365 to 368 (GSTR). The nucleotide-binding (NBD) stretch occupies residues 127-281 (KPYIEVDIGD…KKKTGKDVRA (155 aa)). Residues 410–420 (QDTGDLVLLDV) are interdomain linker. Residues 421-501 (CPLTLGIETV…PRGVPQIEVT (81 aa)) form a substrate-binding (SBD) region. The interval 634 to 658 (KLYGGAGAPPPEGAEGAEETEKDEL) is disordered. A compositionally biased stretch (acidic residues) spans 648–658 (EGAEETEKDEL). The short motif at 655-658 (KDEL) is the Prevents secretion from ER element.

The protein belongs to the heat shock protein 70 family. As to quaternary structure, monomer and homooligomer; homooligomerization via the interdomain linker inactivates the chaperone activity and acts as a storage of hspa5/BiP molecules. Interacts with DNAJC10. Interacts with dnajb9/ERdj4; leading to recruit hspa5/BiP to ern1/ire1. Interacts with ern1/ire1; interaction takes place following interaction with dnajb9/ERdj4 and leads to inactivate ern1/IRE1.

It is found in the endoplasmic reticulum lumen. The catalysed reaction is ATP + H2O = ADP + phosphate + H(+). With respect to regulation, the chaperone activity is regulated by ATP-induced allosteric coupling of the nucleotide-binding (NBD) and substrate-binding (SBD) domains. In the ADP-bound and nucleotide-free (apo) states, the two domains have little interaction. In contrast, in the ATP-bound state the two domains are tightly coupled, which results in drastically accelerated kinetics in both binding and release of polypeptide substrates. J domain-containing co-chaperones (dnajb9/ERdj4 or dnajc10/ERdj5) stimulate the ATPase activity and are required for efficient substrate recognition by hspa5/BiP. Homooligomerization inactivates participating hspa5/BiP protomers and probably act as reservoirs to store hspa5/BiP molecules when they are not needed by the cell. Functionally, endoplasmic reticulum chaperone that plays a key role in protein folding and quality control in the endoplasmic reticulum lumen. Involved in the correct folding of proteins and degradation of misfolded proteins via its interaction with dnajc10/ERdj5, probably to facilitate the release of dnajc10/ERdj5 from its substrate. Acts as a key repressor of the EIF2AK3/PERK and ERN1/IRE1-mediated unfolded protein response (UPR). In the unstressed endoplasmic reticulum, recruited by DNAJB9/ERdj4 to the luminal region of ERN1/IRE1, leading to disrupt the dimerization of ERN1/IRE1, thereby inactivating ERN1/IRE1. Also binds and inactivates EIF2AK3/PERK in unstressed cells. Accumulation of misfolded protein in the endoplasmic reticulum causes release of HSPA5/BiP from ERN1/IRE1 and EIF2AK3/PERK, allowing their homodimerization and subsequent activation. The sequence is that of Endoplasmic reticulum chaperone BiP from Xenopus laevis (African clawed frog).